The chain runs to 231 residues: Ribonuclease 3 (231 aa).

In terms of domain architecture, RNase III spans Gln5 to Gly134. Glu47 serves as a coordination point for Mg(2+). Asp51 is a catalytic residue. Residues Asn120 and Glu123 each contribute to the Mg(2+) site. Glu123 is an active-site residue. The DRBM domain maps to Asp160–His229.

It belongs to the ribonuclease III family. As to quaternary structure, homodimer. Mg(2+) is required as a cofactor.

Its subcellular location is the cytoplasm. It catalyses the reaction Endonucleolytic cleavage to 5'-phosphomonoester.. Its function is as follows. Digests double-stranded RNA. Involved in the processing of primary rRNA transcript to yield the immediate precursors to the large and small rRNAs (23S and 16S). Processes some mRNAs, and tRNAs when they are encoded in the rRNA operon. Processes pre-crRNA and tracrRNA of type II CRISPR loci if present in the organism. The sequence is that of Ribonuclease 3 from Lactococcus lactis subsp. lactis (strain IL1403) (Streptococcus lactis).